Reading from the N-terminus, the 280-residue chain is UPF0750 membrane protein YitT (280 aa).

4 helical membrane-spanning segments follow: residues 9–29, 54–74, 80–100, and 151–171; these read LLIV…FLIP, FYIS…ILGW, SFTV…GILP, and VGTY…LLQG.

It belongs to the UPF0750 family.

The protein localises to the cell membrane. This chain is UPF0750 membrane protein YitT (yitT), found in Bacillus subtilis (strain 168).